The sequence spans 249 residues: Segregation and condensation protein A (249 aa).

This sequence belongs to the ScpA family. Component of a cohesin-like complex composed of ScpA, ScpB and the Smc homodimer, in which ScpA and ScpB bind to the head domain of Smc. The presence of the three proteins is required for the association of the complex with DNA.

It is found in the cytoplasm. Participates in chromosomal partition during cell division. May act via the formation of a condensin-like complex containing Smc and ScpB that pull DNA away from mid-cell into both cell halves. The sequence is that of Segregation and condensation protein A from Mycoplasmopsis pulmonis (strain UAB CTIP) (Mycoplasma pulmonis).